The chain runs to 898 residues: Protein translocase subunit SecA (898 aa).

Residues glutamine 87, 105 to 109 (GEGKT), and aspartate 512 each bind ATP. Over residues 855-865 (MQYQNNEGTSS) the composition is skewed to polar residues. The segment at 855-898 (MQYQNNEGTSSLHEKSEHKIGRNESCPCGSGKKYKHCHGSKAKY) is disordered. Positions 866-876 (LHEKSEHKIGR) are enriched in basic and acidic residues. Positions 880, 882, 891, and 892 each coordinate Zn(2+). Basic residues predominate over residues 886-898 (KKYKHCHGSKAKY).

It belongs to the SecA family. As to quaternary structure, monomer and homodimer. Part of the essential Sec protein translocation apparatus which comprises SecA, SecYEG and auxiliary proteins SecDF-YajC and YidC. Requires Zn(2+) as cofactor.

The protein resides in the cell inner membrane. The protein localises to the cytoplasm. It carries out the reaction ATP + H2O + cellular proteinSide 1 = ADP + phosphate + cellular proteinSide 2.. Functionally, part of the Sec protein translocase complex. Interacts with the SecYEG preprotein conducting channel. Has a central role in coupling the hydrolysis of ATP to the transfer of proteins into and across the cell membrane, serving both as a receptor for the preprotein-SecB complex and as an ATP-driven molecular motor driving the stepwise translocation of polypeptide chains across the membrane. In Histophilus somni (strain 2336) (Haemophilus somnus), this protein is Protein translocase subunit SecA.